The chain runs to 143 residues: MKTYFQKPQEVQRKWYIIDARDKIVGKVAEKVACLLRGKHKEVFSPHVDTGDHVIVINASKAIFSGKKETQKLYSAYSGYIGGQKTFSPVQIRQKRPNFIIEHAVRGMIPHNRLGRKIYTKLHVYEGSDHPHAAQKPIPVTLD.

This sequence belongs to the universal ribosomal protein uL13 family. As to quaternary structure, part of the 50S ribosomal subunit.

This protein is one of the early assembly proteins of the 50S ribosomal subunit, although it is not seen to bind rRNA by itself. It is important during the early stages of 50S assembly. This chain is Large ribosomal subunit protein uL13, found in Methylacidiphilum infernorum (isolate V4) (Methylokorus infernorum (strain V4)).